A 155-amino-acid chain; its full sequence is MVEFTHISDGRAQMVDISAKPDVVREAVAQGRIYLRPATLAAIREGSVVKGNVLATARVAATLAVKDTPRIIPMCHTIPLGAVTVDFTEGDGYIEATVVTKSTGKTGVEMEALTGVSVALLTIWDMVKSAEKDENGQYPVTCIEGIRVVEKKKGQ.

Substrate-binding positions include 74 to 76 and 110 to 111; these read MCH and ME. Residue Asp-125 is part of the active site.

It belongs to the MoaC family. As to quaternary structure, homohexamer; trimer of dimers.

It carries out the reaction (8S)-3',8-cyclo-7,8-dihydroguanosine 5'-triphosphate = cyclic pyranopterin phosphate + diphosphate. Its pathway is cofactor biosynthesis; molybdopterin biosynthesis. Functionally, catalyzes the conversion of (8S)-3',8-cyclo-7,8-dihydroguanosine 5'-triphosphate to cyclic pyranopterin monophosphate (cPMP). In Methanoregula boonei (strain DSM 21154 / JCM 14090 / 6A8), this protein is Probable cyclic pyranopterin monophosphate synthase.